The sequence spans 304 residues: Cell surface-binding protein OPG105 (304 aa).

This sequence belongs to the alpha-carbonic anhydrase family. Homodimer; disulfide-linked. Apparently non-glycosylated.

It is found in the virion membrane. Binds to chondroitin sulfate on the cell surface to provide virion attachment to target cell. The protein is Cell surface-binding protein OPG105 (OPG105) of Monkeypox virus.